The following is a 152-amino-acid chain: 2-C-methyl-D-erythritol 2,4-cyclodiphosphate synthase (152 aa).

The a divalent metal cation site is built by aspartate 8 and histidine 10. 4-CDP-2-C-methyl-D-erythritol 2-phosphate is bound by residues 8–10 (DSH) and 34–35 (HS). An a divalent metal cation-binding site is contributed by histidine 42. 4-CDP-2-C-methyl-D-erythritol 2-phosphate contacts are provided by residues 56 to 58 (DIG), 61 to 65 (FPDTD), 100 to 106 (LDRPKLG), and 131 to 135 (FKTSE).

This sequence belongs to the IspF family. As to quaternary structure, homotrimer. A divalent metal cation serves as cofactor.

It carries out the reaction 4-CDP-2-C-methyl-D-erythritol 2-phosphate = 2-C-methyl-D-erythritol 2,4-cyclic diphosphate + CMP. Its pathway is isoprenoid biosynthesis; isopentenyl diphosphate biosynthesis via DXP pathway; isopentenyl diphosphate from 1-deoxy-D-xylulose 5-phosphate: step 4/6. Its function is as follows. Involved in the biosynthesis of isopentenyl diphosphate (IPP) and dimethylallyl diphosphate (DMAPP), two major building blocks of isoprenoid compounds. Catalyzes the conversion of 4-diphosphocytidyl-2-C-methyl-D-erythritol 2-phosphate (CDP-ME2P) to 2-C-methyl-D-erythritol 2,4-cyclodiphosphate (ME-CPP) with a corresponding release of cytidine 5-monophosphate (CMP). The sequence is that of 2-C-methyl-D-erythritol 2,4-cyclodiphosphate synthase from Thermus thermophilus (strain ATCC 27634 / DSM 579 / HB8).